Reading from the N-terminus, the 230-residue chain is Fibrillarin-like rRNA/tRNA 2'-O-methyltransferase (230 aa).

Residues 87–88, 105–106, 130–131, and 150–153 contribute to the S-adenosyl-L-methionine site; these read TT, EY, DA, and DVAQ.

Interacts with nop5. Component of box C/D small ribonucleoprotein (sRNP) particles that contain rpl7ae, FlpA and nop5, plus a guide RNA.

Involved in pre-rRNA and tRNA processing. Utilizes the methyl donor S-adenosyl-L-methionine to catalyze the site-specific 2'-hydroxyl methylation of ribose moieties in rRNA and tRNA. Site specificity is provided by a guide RNA that base pairs with the substrate. Methylation occurs at a characteristic distance from the sequence involved in base pairing with the guide RNA. This chain is Fibrillarin-like rRNA/tRNA 2'-O-methyltransferase, found in Methanocaldococcus jannaschii (strain ATCC 43067 / DSM 2661 / JAL-1 / JCM 10045 / NBRC 100440) (Methanococcus jannaschii).